The following is a 247-amino-acid chain: 23S rRNA (guanosine-2'-O-)-methyltransferase RlmB (247 aa).

Residues glycine 197, isoleucine 217, and leucine 226 each coordinate S-adenosyl-L-methionine.

This sequence belongs to the class IV-like SAM-binding methyltransferase superfamily. RNA methyltransferase TrmH family. RlmB subfamily.

The protein resides in the cytoplasm. It catalyses the reaction guanosine(2251) in 23S rRNA + S-adenosyl-L-methionine = 2'-O-methylguanosine(2251) in 23S rRNA + S-adenosyl-L-homocysteine + H(+). Specifically methylates the ribose of guanosine 2251 in 23S rRNA. The chain is 23S rRNA (guanosine-2'-O-)-methyltransferase RlmB from Burkholderia sp.